The following is a 412-amino-acid chain: Early growth response protein 2b (412 aa).

The segment at 269–299 (YTPQNLPLRPILRPRKYPNRPSKTPVHERPY) is disordered. 3 consecutive C2H2-type zinc fingers follow at residues 299–323 (YPCP…IRIH), 329–351 (FQCR…IRTH), and 357–379 (FACD…TKIH). The tract at residues 371 to 412 (ERKRHTKIHLRQKERKSSSSSTGVSSSERGVATSICSSSSNQ) is disordered. Residues 374-384 (RHTKIHLRQKE) show a composition bias toward basic residues. Low complexity predominate over residues 388–401 (SSSSTGVSSSERGV).

This sequence belongs to the EGR C2H2-type zinc-finger protein family.

It is found in the nucleus. Functionally, sequence-specific DNA-binding transcription factor. Binds to two specific DNA sites located in the promoter region of HOXA4. The chain is Early growth response protein 2b (egr2b) from Danio rerio (Zebrafish).